The primary structure comprises 1134 residues: MMS19 nucleotide excision repair protein homolog (1134 aa).

4 HEAT repeats span residues 959-998 (QRCF…NVPV), 1002-1047 (LDNT…KGQQ), 1050-1089 (SDNA…LPHR), and 1092-1130 (YPFR…ITSG).

The protein belongs to the MET18/MMS19 family. Part of a complex composed of AE7, CIA1, MMS19 and NAR1. Interacts with AE7.

The protein localises to the nucleus. It localises to the cytoplasm. In terms of biological role, may select specific target apoproteins to which a Fe-S cluster produced by the cytosolic iron-sulfur (Fe-S) protein assembly (CIA) pathway is transferred. The protein is MMS19 nucleotide excision repair protein homolog of Arabidopsis thaliana (Mouse-ear cress).